Here is a 223-residue protein sequence, read N- to C-terminus: Deoxyribose-phosphate aldolase (223 aa).

Asp89 serves as the catalytic Proton donor/acceptor. Lys154 serves as the catalytic Schiff-base intermediate with acetaldehyde. Lys183 serves as the catalytic Proton donor/acceptor.

The protein belongs to the DeoC/FbaB aldolase family. DeoC type 1 subfamily.

The protein localises to the cytoplasm. The enzyme catalyses 2-deoxy-D-ribose 5-phosphate = D-glyceraldehyde 3-phosphate + acetaldehyde. It participates in carbohydrate degradation; 2-deoxy-D-ribose 1-phosphate degradation; D-glyceraldehyde 3-phosphate and acetaldehyde from 2-deoxy-alpha-D-ribose 1-phosphate: step 2/2. Catalyzes a reversible aldol reaction between acetaldehyde and D-glyceraldehyde 3-phosphate to generate 2-deoxy-D-ribose 5-phosphate. The chain is Deoxyribose-phosphate aldolase from Thermoanaerobacter sp. (strain X514).